We begin with the raw amino-acid sequence, 78 residues long: Large ribosomal subunit protein bL28 (78 aa).

A disordered region spans residues 1–21 (MSRVCQVTGKKPMVGNNRSHA).

The protein belongs to the bacterial ribosomal protein bL28 family.

This chain is Large ribosomal subunit protein bL28, found in Shewanella baltica (strain OS223).